A 423-amino-acid chain; its full sequence is CinA-like protein (423 aa).

Belongs to the CinA family.

The sequence is that of CinA-like protein from Chlorobium chlorochromatii (strain CaD3).